The sequence spans 373 residues: tRNA-specific 2-thiouridylase MnmA (373 aa).

Residues 12–19 and methionine 38 contribute to the ATP site; that span reads GMSGGVDS. Residues 98–100 form an interaction with target base in tRNA region; that stretch reads NPD. The active-site Nucleophile is the cysteine 103. A disulfide bridge connects residues cysteine 103 and cysteine 200. Glycine 127 contacts ATP. The segment at 150-152 is interaction with tRNA; the sequence is KDQ. Cysteine 200 functions as the Cysteine persulfide intermediate in the catalytic mechanism. The interaction with tRNA stretch occupies residues 312–313; the sequence is RY.

It belongs to the MnmA/TRMU family.

The protein localises to the cytoplasm. It catalyses the reaction S-sulfanyl-L-cysteinyl-[protein] + uridine(34) in tRNA + AH2 + ATP = 2-thiouridine(34) in tRNA + L-cysteinyl-[protein] + A + AMP + diphosphate + H(+). In terms of biological role, catalyzes the 2-thiolation of uridine at the wobble position (U34) of tRNA, leading to the formation of s(2)U34. The polypeptide is tRNA-specific 2-thiouridylase MnmA (Streptococcus sanguinis (strain SK36)).